Reading from the N-terminus, the 192-residue chain is Cell division protein SepF (192 aa).

The segment at 15–70 (GDPLEYEEDGEEYEQVYREENKREEARRATAGTAAAATPTAAAQASDAAPMGSGPA) is disordered. Over residues 18-28 (LEYEEDGEEYE) the composition is skewed to acidic residues. Basic and acidic residues predominate over residues 29–42 (QVYREENKREEARR). Residues 43–63 (ATAGTAAAATPTAAAQASDAA) show a composition bias toward low complexity.

It belongs to the SepF family. As to quaternary structure, homodimer. Interacts with FtsZ.

The protein localises to the cytoplasm. Functionally, cell division protein that is part of the divisome complex and is recruited early to the Z-ring. Probably stimulates Z-ring formation, perhaps through the cross-linking of FtsZ protofilaments. Its function overlaps with FtsA. This is Cell division protein SepF from Gloeobacter violaceus (strain ATCC 29082 / PCC 7421).